Reading from the N-terminus, the 549-residue chain is Cation/acetate symporter ActP (549 aa).

The next 13 helical transmembrane spans lie at 33-53, 77-97, 103-123, 148-168, 183-203, 206-226, 262-282, 303-323, 355-375, 404-424, 428-448, 464-484, and 493-513; these read WQAI…TYWA, LAIA…ALVF, GLIY…LIAE, ILSA…QMVG, IAVV…GMLA, WVQI…AFMV, ISAL…PHIL, GFMG…IMLV, LFLG…VAGL, VSKI…VLFE, IAFM…PIIL, GGWL…TIWV, and IFPY…GIWF.

Belongs to the sodium:solute symporter (SSF) (TC 2.A.21) family.

The protein resides in the cell inner membrane. Functionally, transports acetate. This chain is Cation/acetate symporter ActP, found in Citrobacter koseri (strain ATCC BAA-895 / CDC 4225-83 / SGSC4696).